Consider the following 204-residue polypeptide: Ribosomal RNA large subunit methyltransferase E (204 aa).

Positions 49, 51, 69, 87, and 111 each coordinate S-adenosyl-L-methionine. The Proton acceptor role is filled by Lys-151.

The protein belongs to the class I-like SAM-binding methyltransferase superfamily. RNA methyltransferase RlmE family.

It localises to the cytoplasm. The enzyme catalyses uridine(2552) in 23S rRNA + S-adenosyl-L-methionine = 2'-O-methyluridine(2552) in 23S rRNA + S-adenosyl-L-homocysteine + H(+). Specifically methylates the uridine in position 2552 of 23S rRNA at the 2'-O position of the ribose in the fully assembled 50S ribosomal subunit. The polypeptide is Ribosomal RNA large subunit methyltransferase E (Nitratidesulfovibrio vulgaris (strain ATCC 29579 / DSM 644 / CCUG 34227 / NCIMB 8303 / VKM B-1760 / Hildenborough) (Desulfovibrio vulgaris)).